A 216-amino-acid chain; its full sequence is Adenylate kinase (216 aa).

10-15 lines the ATP pocket; it reads GAGKGT. Positions 30-59 are NMP; sequence STGDMLRAAVKAGTPLGLELKKVMDAGQLV. AMP is bound by residues Thr31, Arg36, 57–59, 85–88, and Gln92; these read QLV and GFPR. Residues 122-159 form an LID region; the sequence is GRRVHLASGRTYHIQYNPPKVEGKDDVTGEDLIQRDDD. Residues Arg123 and 132 to 133 each bind ATP; that span reads TY. The AMP site is built by Arg156 and Arg167. Gly202 serves as a coordination point for ATP.

The protein belongs to the adenylate kinase family. As to quaternary structure, monomer.

It localises to the cytoplasm. The enzyme catalyses AMP + ATP = 2 ADP. The protein operates within purine metabolism; AMP biosynthesis via salvage pathway; AMP from ADP: step 1/1. In terms of biological role, catalyzes the reversible transfer of the terminal phosphate group between ATP and AMP. Plays an important role in cellular energy homeostasis and in adenine nucleotide metabolism. The chain is Adenylate kinase from Pseudomonas putida (strain GB-1).